Here is an 81-residue protein sequence, read N- to C-terminus: Sulfur carrier protein TusA (81 aa).

C19 (cysteine persulfide intermediate) is an active-site residue.

The protein belongs to the sulfur carrier protein TusA family. As to quaternary structure, interacts with IscS.

It localises to the cytoplasm. It participates in tRNA modification. Functionally, sulfur carrier protein involved in sulfur trafficking in the cell. Part of a sulfur-relay system required for 2-thiolation during synthesis of 2-thiouridine of the modified wobble base 5-methylaminomethyl-2-thiouridine (mnm(5)s(2)U) in tRNA. Interacts with IscS and stimulates its cysteine desulfurase activity. Accepts an activated sulfur from IscS, which is then transferred to TusD, and thus determines the direction of sulfur flow from IscS to 2-thiouridine formation. Also appears to be involved in sulfur transfer for the biosynthesis of molybdopterin. This Salmonella choleraesuis (strain SC-B67) protein is Sulfur carrier protein TusA.